The following is an 833-amino-acid chain: Probable serine/threonine-protein kinase DDB_G0277165 (833 aa).

In terms of domain architecture, Protein kinase spans 9–262 (FIIGKTLGQG…IKEIKEHPWF (254 aa)). Residues 15–23 (LGQGTTGKV) and lysine 38 contribute to the ATP site. The Proton acceptor role is filled by aspartate 133. Residues 288-329 (QIDEDIFRSLMALGVGTIDEVKQQLVSNQKSATLIYYRLLEE) enclose the UBA domain. The span at 338–351 (NKYGYKPKETRRNS) shows a compositional bias: basic and acidic residues. 3 disordered regions span residues 338–472 (NKYG…ISPS), 528–626 (QALQ…PIEI), and 764–799 (FINPVSPSKQHHHHHHQQQQPQQQQMPPLNLNGGQN). Low complexity-rich tracts occupy residues 365 to 432 (NNNN…NNNN) and 441 to 459 (SSSQQPPHIQQPHSQQIPS). The segment covering 460 to 472 (NSTSQESMQISPS) has biased composition (polar residues). Residues 528 to 589 (QALQQHHQQQ…SSTSTSPQLS (62 aa)) show a composition bias toward low complexity. A compositionally biased stretch (polar residues) spans 600–625 (GSMTASTNPATSPTMSHRGKTSSPIE).

This sequence belongs to the protein kinase superfamily. CAMK Ser/Thr protein kinase family.

The catalysed reaction is L-seryl-[protein] + ATP = O-phospho-L-seryl-[protein] + ADP + H(+). The enzyme catalyses L-threonyl-[protein] + ATP = O-phospho-L-threonyl-[protein] + ADP + H(+). This is Probable serine/threonine-protein kinase DDB_G0277165 from Dictyostelium discoideum (Social amoeba).